The following is a 167-amino-acid chain: uncharacterized protein (167 aa).

The first 23 residues, 1 to 23, serve as a signal peptide directing secretion; that stretch reads MKRLHKRFLLATFCALFTATLQA. C39 and C77 are oxidised to a cystine.

Belongs to the fimbrial protein family.

It is found in the fimbrium. This is an uncharacterized protein from Escherichia coli (strain K12).